Consider the following 116-residue polypeptide: Cation channel sperm-associated auxiliary subunit TMEM262 (116 aa).

At 1-16 (MWLQDRIATFFFPKGM) the chain is on the cytoplasmic side. A helical membrane pass occupies residues 17-38 (MLTTAALMLFFLHLGIFIRDVH). At 39–51 (NFCITYHYDHMSF) the chain is on the extracellular side. Residues 52–72 (HYTVVLMFSQVISICWAAMGS) traverse the membrane as a helical segment. Topologically, residues 73-84 (LYAEMTENKYVC) are cytoplasmic. The helical transmembrane segment at 85–107 (FSALTILMLNGAMFFNRLSLEFL) threads the bilayer. At 108–116 (AIEYREEHH) the chain is on the extracellular side.

In terms of assembly, component of the CatSper complex or CatSpermasome composed of the core pore-forming members CATSPER1, CATSPER2, CATSPER3 and CATSPER4 as well as auxiliary members CATSPERB, CATSPERG, CATSPERD, CATSPERE, CATSPERZ, C2CD6/CATSPERT, TMEM249, TMEM262 and EFCAB9. HSPA1 may be an additional auxiliary complex member. The core complex members CATSPER1, CATSPER2, CATSPER3 and CATSPER4 form a heterotetrameric channel. The auxiliary CATSPERB, CATSPERG, CATSPERD and CATSPERE subunits form a pavilion-like structure over the pore which stabilizes the complex through interactions with CATSPER4, CATSPER3, CATSPER1 and CATSPER2 respectively. TMEM262/CATSPERH interacts with CATSPERB, further stabilizing the complex. C2CD6/CATSPERT interacts at least with CATSPERD and is required for targeting the CatSper complex in the flagellar membrane.

The protein resides in the cell projection. Its subcellular location is the cilium. The protein localises to the flagellum membrane. Its function is as follows. Auxiliary component of the CatSper complex, a complex involved in sperm cell hyperactivation. The protein is Cation channel sperm-associated auxiliary subunit TMEM262 of Homo sapiens (Human).